A 779-amino-acid chain; its full sequence is Phosphoribosylformylglycinamidine synthase subunit PurL (779 aa).

Histidine 52 is an active-site residue. The ATP site is built by tyrosine 55 and lysine 94. Mg(2+) is bound at residue glutamate 96. Substrate is bound by residues 97 to 100 (SHNH) and arginine 119. The active-site Proton acceptor is the histidine 98. Residue aspartate 120 coordinates Mg(2+). Substrate is bound at residue glutamine 243. Aspartate 271 is a Mg(2+) binding site. 315–317 (ESQ) lines the substrate pocket. 2 residues coordinate ATP: asparagine 523 and glycine 560. Asparagine 561 is a Mg(2+) binding site. Serine 563 lines the substrate pocket.

This sequence belongs to the FGAMS family. In terms of assembly, monomer. Part of the FGAM synthase complex composed of 1 PurL, 1 PurQ and 2 PurS subunits.

It is found in the cytoplasm. The catalysed reaction is N(2)-formyl-N(1)-(5-phospho-beta-D-ribosyl)glycinamide + L-glutamine + ATP + H2O = 2-formamido-N(1)-(5-O-phospho-beta-D-ribosyl)acetamidine + L-glutamate + ADP + phosphate + H(+). The protein operates within purine metabolism; IMP biosynthesis via de novo pathway; 5-amino-1-(5-phospho-D-ribosyl)imidazole from N(2)-formyl-N(1)-(5-phospho-D-ribosyl)glycinamide: step 1/2. In terms of biological role, part of the phosphoribosylformylglycinamidine synthase complex involved in the purines biosynthetic pathway. Catalyzes the ATP-dependent conversion of formylglycinamide ribonucleotide (FGAR) and glutamine to yield formylglycinamidine ribonucleotide (FGAM) and glutamate. The FGAM synthase complex is composed of three subunits. PurQ produces an ammonia molecule by converting glutamine to glutamate. PurL transfers the ammonia molecule to FGAR to form FGAM in an ATP-dependent manner. PurS interacts with PurQ and PurL and is thought to assist in the transfer of the ammonia molecule from PurQ to PurL. This Prochlorococcus marinus subsp. pastoris (strain CCMP1986 / NIES-2087 / MED4) protein is Phosphoribosylformylglycinamidine synthase subunit PurL.